Reading from the N-terminus, the 565-residue chain is Protein nucleotidyltransferase YdiU (565 aa).

ATP contacts are provided by glycine 118, glycine 120, arginine 121, lysine 141, aspartate 153, glycine 154, arginine 211, and arginine 218. The active-site Proton acceptor is the aspartate 290. Positions 291 and 300 each coordinate Mg(2+). An ATP-binding site is contributed by aspartate 300.

Belongs to the SELO family. Mg(2+) serves as cofactor. Requires Mn(2+) as cofactor.

It carries out the reaction L-seryl-[protein] + ATP = 3-O-(5'-adenylyl)-L-seryl-[protein] + diphosphate. The catalysed reaction is L-threonyl-[protein] + ATP = 3-O-(5'-adenylyl)-L-threonyl-[protein] + diphosphate. It catalyses the reaction L-tyrosyl-[protein] + ATP = O-(5'-adenylyl)-L-tyrosyl-[protein] + diphosphate. The enzyme catalyses L-histidyl-[protein] + UTP = N(tele)-(5'-uridylyl)-L-histidyl-[protein] + diphosphate. It carries out the reaction L-seryl-[protein] + UTP = O-(5'-uridylyl)-L-seryl-[protein] + diphosphate. The catalysed reaction is L-tyrosyl-[protein] + UTP = O-(5'-uridylyl)-L-tyrosyl-[protein] + diphosphate. In terms of biological role, nucleotidyltransferase involved in the post-translational modification of proteins. It can catalyze the addition of adenosine monophosphate (AMP) or uridine monophosphate (UMP) to a protein, resulting in modifications known as AMPylation and UMPylation. The polypeptide is Protein nucleotidyltransferase YdiU (Nitrosospira multiformis (strain ATCC 25196 / NCIMB 11849 / C 71)).